A 497-amino-acid polypeptide reads, in one-letter code: Envelope glycoprotein E (497 aa).

Residues 1 to 398 are Virion surface-facing; it reads MCVFQILIIV…GTIIYDILLT (398 aa). Residues Asn60, Asn133, Asn148, Asn203, Asn277, Asn366, and Asn388 are each glycosylated (N-linked (GlcNAc...) asparagine; by host). Residues 399–419 form a helical membrane-spanning segment; it reads SLSIGAIIIVIVGGVCIAILI. The Intravirion segment spans residues 420 to 497; the sequence is RRRRRRRTRG…KIRKRLDLYH (78 aa).

This sequence belongs to the alphaherpesvirinae glycoprotein E family. Interacts with gI. In terms of processing, phosphorylated within the acidic cluster. Phosphorylation determines whether endocytosed viral gE traffics to the trans-Golgi network or recycles to the cell membrane.

It localises to the virion membrane. The protein resides in the host cell membrane. Its subcellular location is the host cell junction. The protein localises to the host Golgi apparatus membrane. It is found in the host endosome membrane. In epithelial cells, the heterodimer gE/gI is required for the cell-to-cell spread of the virus, by sorting nascent virions to cell junctions. Once the virus reaches the cell junctions, virus particles can spread to adjacent cells extremely rapidly through interactions with cellular receptors that accumulate at these junctions. Implicated in basolateral spread in polarized cells. In neuronal cells, gE/gI is essential for the anterograde spread of the infection throughout the host nervous system. Together with US9, the heterodimer gE/gI is involved in the sorting and transport of viral structural components toward axon tips. This chain is Envelope glycoprotein E (MDV096), found in Gallus gallus (Chicken).